Reading from the N-terminus, the 427-residue chain is Glutamate-1-semialdehyde 2,1-aminomutase (427 aa).

Position 267 is an N6-(pyridoxal phosphate)lysine (lysine 267).

It belongs to the class-III pyridoxal-phosphate-dependent aminotransferase family. HemL subfamily. In terms of assembly, homodimer. It depends on pyridoxal 5'-phosphate as a cofactor.

It localises to the cytoplasm. The enzyme catalyses (S)-4-amino-5-oxopentanoate = 5-aminolevulinate. It functions in the pathway porphyrin-containing compound metabolism; protoporphyrin-IX biosynthesis; 5-aminolevulinate from L-glutamyl-tRNA(Glu): step 2/2. This Geobacter metallireducens (strain ATCC 53774 / DSM 7210 / GS-15) protein is Glutamate-1-semialdehyde 2,1-aminomutase.